The primary structure comprises 556 residues: Arginine--tRNA ligase (556 aa).

The 'HIGH' region signature appears at 132-142; that stretch reads ANPTGNLHLGH.

It belongs to the class-I aminoacyl-tRNA synthetase family. In terms of assembly, monomer.

It is found in the cytoplasm. The catalysed reaction is tRNA(Arg) + L-arginine + ATP = L-arginyl-tRNA(Arg) + AMP + diphosphate. In Bacillus licheniformis (strain ATCC 14580 / DSM 13 / JCM 2505 / CCUG 7422 / NBRC 12200 / NCIMB 9375 / NCTC 10341 / NRRL NRS-1264 / Gibson 46), this protein is Arginine--tRNA ligase.